Reading from the N-terminus, the 940-residue chain is Alanine--tRNA ligase (940 aa).

Zn(2+) contacts are provided by histidine 581, histidine 585, cysteine 683, and histidine 687.

Belongs to the class-II aminoacyl-tRNA synthetase family. Zn(2+) serves as cofactor.

It is found in the cytoplasm. It carries out the reaction tRNA(Ala) + L-alanine + ATP = L-alanyl-tRNA(Ala) + AMP + diphosphate. Catalyzes the attachment of alanine to tRNA(Ala) in a two-step reaction: alanine is first activated by ATP to form Ala-AMP and then transferred to the acceptor end of tRNA(Ala). Also edits incorrectly charged Ser-tRNA(Ala) and Gly-tRNA(Ala) via its editing domain. The polypeptide is Alanine--tRNA ligase (Leptospira borgpetersenii serovar Hardjo-bovis (strain JB197)).